Reading from the N-terminus, the 208-residue chain is Sodium/potassium-transporting ATPase subunit beta-1-interacting protein 4 (208 aa).

Transmembrane regions (helical) follow at residues 10–30 (LILLCTLQLVAALERQVFDFL), 35–55 (APILANFLHIVATILGLFGTL), 62–82 (VIAYALWAAVWVTWNVFLICF), and 151–171 (ALQILLALLGFVYACYVTSVF).

It belongs to the NKAIN family. In terms of assembly, interacts with atp1b1 C-terminus.

The protein resides in the cell membrane. In Xenopus tropicalis (Western clawed frog), this protein is Sodium/potassium-transporting ATPase subunit beta-1-interacting protein 4 (nkain4).